The primary structure comprises 420 residues: Serine/threonine-protein phosphatase 4 regulatory subunit 2-A (420 aa).

Positions Gly-157–Asp-420 are disordered. Residues Ser-182–Ser-195 are compositionally biased toward polar residues. Basic and acidic residues predominate over residues Thr-196–Val-210. The segment covering Glu-212–Ala-224 has biased composition (low complexity). Basic and acidic residues predominate over residues His-229–Lys-250. Residues Glu-251–Asp-266 show a composition bias toward acidic residues. The segment covering Glu-267 to His-276 has biased composition (basic and acidic residues). The segment covering Pro-278–Val-296 has biased composition (polar residues). Positions Gly-318–His-332 are enriched in basic and acidic residues. The span at Ala-346–Asn-364 shows a compositional bias: acidic residues. The span at Ser-368–Glu-394 shows a compositional bias: low complexity. A compositionally biased stretch (acidic residues) spans Glu-411 to Asp-420.

This sequence belongs to the PPP4R2 family. Serine/threonine-protein phosphatase 4 (PP4) occurs in different assemblies of the catalytic and one or more regulatory subunits.

Functionally, regulatory subunit of serine/threonine-protein phosphatase 4 (PP4C). The protein is Serine/threonine-protein phosphatase 4 regulatory subunit 2-A (ppp4r2a) of Danio rerio (Zebrafish).